Consider the following 225-residue polypeptide: uncharacterized protein (225 aa).

In terms of domain architecture, Fe2OG dioxygenase spans Asp-114 to Ile-219.

The protein belongs to the iron/ascorbate-dependent oxidoreductase family.

The protein resides in the cytoplasm. It is found in the nucleus. This is an uncharacterized protein from Schizosaccharomyces pombe (strain 972 / ATCC 24843) (Fission yeast).